The chain runs to 401 residues: MARNIVVEEIVRTPVEKQKVELVERKGIGHPDSIADGIAESISRALSREYMKRYGVILHHNTDQVEVVGGRAYPRFGGGEVVKPIYILLSGRAVELVDQELFPVHEVAIKAAKEYLKKNIRHLDVENHVVIDSRIGQGSVDLVSVFNKAKENPIPLANDTSFGVGFAPLTETERLVYETERLLNGEKFKKELPAVGEDIKVMGLRRGDEIDLTIAAAIVDSEVSGPKEYLEVKEKIAEAVEELAKDITSRKVNIYVNTADDPDSGIFYITVTGTSAEAGDDGSVGRGNRVNGLITPNRHMSMEAAAGKNPVSHVGKIYNILAMFIANDIAKTLPVEEVYVRILSQIGKPIDQPLVASIQVIPKQGHSVKEFEKDAYSIADEWLANITKIQKMILEDKISVF.

Residue 136-141 (GQGSVD) coordinates ATP.

This sequence belongs to the AdoMet synthase 2 family. Requires Mg(2+) as cofactor.

The catalysed reaction is L-methionine + ATP + H2O = S-adenosyl-L-methionine + phosphate + diphosphate. Its pathway is amino-acid biosynthesis; S-adenosyl-L-methionine biosynthesis; S-adenosyl-L-methionine from L-methionine: step 1/1. Catalyzes the formation of S-adenosylmethionine from methionine and ATP. This is S-adenosylmethionine synthase (mat) from Pyrococcus abyssi (strain GE5 / Orsay).